Here is a 600-residue protein sequence, read N- to C-terminus: Aspartate--tRNA(Asp/Asn) ligase (600 aa).

Glutamate 174 provides a ligand contact to L-aspartate. An aspartate region spans residues glutamine 198–lysine 201. Residue arginine 220 participates in L-aspartate binding. ATP is bound by residues arginine 220 to glutamate 222 and glutamine 229. Residue histidine 457 participates in L-aspartate binding. Glutamate 491 contacts ATP. Arginine 498 is an L-aspartate binding site. Residue glycine 543 to arginine 546 coordinates ATP.

It belongs to the class-II aminoacyl-tRNA synthetase family. Type 1 subfamily. Homodimer.

It is found in the cytoplasm. It carries out the reaction tRNA(Asx) + L-aspartate + ATP = L-aspartyl-tRNA(Asx) + AMP + diphosphate. In terms of biological role, aspartyl-tRNA synthetase with relaxed tRNA specificity since it is able to aspartylate not only its cognate tRNA(Asp) but also tRNA(Asn). Reaction proceeds in two steps: L-aspartate is first activated by ATP to form Asp-AMP and then transferred to the acceptor end of tRNA(Asp/Asn). The polypeptide is Aspartate--tRNA(Asp/Asn) ligase (Burkholderia mallei (strain NCTC 10247)).